A 373-amino-acid polypeptide reads, in one-letter code: Chorismate synthase (373 aa).

The NADP(+) site is built by R48 and R54. Residues 131–133 (RSS), 243–244 (NA), G288, 303–307 (KPTSS), and R329 contribute to the FMN site.

Belongs to the chorismate synthase family. In terms of assembly, homotetramer. FMNH2 serves as cofactor.

The catalysed reaction is 5-O-(1-carboxyvinyl)-3-phosphoshikimate = chorismate + phosphate. It functions in the pathway metabolic intermediate biosynthesis; chorismate biosynthesis; chorismate from D-erythrose 4-phosphate and phosphoenolpyruvate: step 7/7. Functionally, catalyzes the anti-1,4-elimination of the C-3 phosphate and the C-6 proR hydrogen from 5-enolpyruvylshikimate-3-phosphate (EPSP) to yield chorismate, which is the branch point compound that serves as the starting substrate for the three terminal pathways of aromatic amino acid biosynthesis. This reaction introduces a second double bond into the aromatic ring system. This chain is Chorismate synthase, found in Beijerinckia indica subsp. indica (strain ATCC 9039 / DSM 1715 / NCIMB 8712).